The primary structure comprises 239 residues: MRVLKFLSLMAMLGCTIGQSGSATPGSLHLLGGPTTTDWYPECALRCWENTKYVTKCSEDQQCLCSDVNYQNSVFQCIYSQCDTVHFGSALHHAIAQCLGTDNEVFFAIPPIPDRDALRRREDEYAAGAKLFGSGSAAGYPTESAAFPVQSANYPTDSVGGPYSPSPTASVPFPYFSLTSVTSPAAKSATTTEATRNTVPASTTAPSPSPQLYTGNASTSRATVSLTVVLTVAAVYLVL.

The N-terminal stretch at 1–18 (MRVLKFLSLMAMLGCTIG) is a signal peptide. In terms of domain architecture, CFEM spans 19-125 (QSGSATPGSL…DALRRREDEY (107 aa)). 4 cysteine pairs are disulfide-bonded: Cys43-Cys82, Cys47-Cys77, Cys57-Cys63, and Cys65-Cys98. Asp60 is a binding site for heme. Residues 187–199 (KSATTTEATRNTV) show a composition bias toward polar residues. A disordered region spans residues 187-216 (KSATTTEATRNTVPASTTAPSPSPQLYTGN). Gly215 carries GPI-anchor amidated glycine lipidation. The N-linked (GlcNAc...) asparagine glycan is linked to Asn216. Positions 216–239 (NASTSRATVSLTVVLTVAAVYLVL) are cleaved as a propeptide — removed in mature form.

It belongs to the RBT5 family.

The protein localises to the cell membrane. It localises to the secreted. It is found in the host nucleus. Its subcellular location is the host cell membrane. Its function is as follows. Appears to function during host infection, and may play a role in suppressing the host immune response. This chain is Secreted effector CFEM9, found in Marssonina brunnea f. sp. multigermtubi (strain MB_m1) (Marssonina leaf spot fungus).